The chain runs to 463 residues: L-seryl-tRNA(Sec) selenium transferase (463 aa).

Residue K295 is modified to N6-(pyridoxal phosphate)lysine.

The protein belongs to the SelA family. Homodecamer; pentamer of dimers. Binds only one seryl-tRNA(Sec) per dimer. Requires pyridoxal 5'-phosphate as cofactor.

Its subcellular location is the cytoplasm. It catalyses the reaction L-seryl-tRNA(Sec) + selenophosphate + H(+) = L-selenocysteinyl-tRNA(Sec) + phosphate. It participates in aminoacyl-tRNA biosynthesis; selenocysteinyl-tRNA(Sec) biosynthesis; selenocysteinyl-tRNA(Sec) from L-seryl-tRNA(Sec) (bacterial route): step 1/1. Functionally, converts seryl-tRNA(Sec) to selenocysteinyl-tRNA(Sec) required for selenoprotein biosynthesis. The protein is L-seryl-tRNA(Sec) selenium transferase of Shigella dysenteriae serotype 1 (strain Sd197).